Reading from the N-terminus, the 375-residue chain is DNA replication and repair protein RecF (375 aa).

30–37 (GENAQGKT) serves as a coordination point for ATP.

This sequence belongs to the RecF family.

Its subcellular location is the cytoplasm. The RecF protein is involved in DNA metabolism; it is required for DNA replication and normal SOS inducibility. RecF binds preferentially to single-stranded, linear DNA. It also seems to bind ATP. This Latilactobacillus sakei subsp. sakei (strain 23K) (Lactobacillus sakei subsp. sakei) protein is DNA replication and repair protein RecF.